Here is a 1388-residue protein sequence, read N- to C-terminus: Retrotransposon Gag-like protein 9 (1388 aa).

5 disordered regions span residues A491–S511, T769–S790, G895–S918, T1100–V1138, and A1336–K1388. Residues G1103–M1123 show a composition bias toward polar residues. Over residues Y1359–L1374 the composition is skewed to basic and acidic residues.

The protein is Retrotransposon Gag-like protein 9 of Homo sapiens (Human).